The chain runs to 398 residues: Arylacetamide deacetylase (398 aa).

Residues 1–4 are Cytoplasmic-facing; sequence GVKT. The chain crosses the membrane as a helical; Signal-anchor for type II membrane protein span at residues 5–22; that stretch reads VLLLIVGVLGAYYVYTPL. Residues 23 to 398 are Lumenal-facing; that stretch reads PDNIEEPWRL…QYFEWLRENV (376 aa). A glycan (N-linked (GlcNAc...) asparagine) is linked at Asn77. Positions 110–112 match the Involved in the stabilization of the negatively charged intermediate by the formation of the oxyanion hole motif; that stretch reads HGG. A disulfide bridge links Cys115 with Cys339. Residue Ser188 is part of the active site. Asn281 carries N-linked (GlcNAc...) asparagine glycosylation. Active-site residues include Asp342 and His372.

Belongs to the 'GDXG' lipolytic enzyme family. In terms of processing, glycosylated.

The protein resides in the endoplasmic reticulum membrane. The protein localises to the microsome membrane. The catalysed reaction is a triacylglycerol + H2O = a diacylglycerol + a fatty acid + H(+). Its activity is regulated as follows. Inhibited by diisopropylphosphofluoridate (DFP). In terms of biological role, displays cellular triglyceride lipase activity in liver, increases the levels of intracellular fatty acids derived from the hydrolysis of newly formed triglyceride stores and plays a role in very low-density lipoprotein assembly. Displays serine esterase activity in liver. Deacetylates a variety of arylacetamide substrates, including xenobiotic compounds and procarcinogens, converting them to the primary arylamide compounds and increasing their toxicity. In Oryctolagus cuniculus (Rabbit), this protein is Arylacetamide deacetylase.